Consider the following 372-residue polypeptide: Alanine dehydrogenase (372 aa).

Residues R15 and K75 each coordinate substrate. H96 (proton donor/acceptor) is an active-site residue. NAD(+)-binding positions include S134, 178 to 179 (TA), D198, S220, 239 to 240 (VL), 266 to 269 (IAID), R279, and 298 to 301 (VANM). Catalysis depends on D269, which acts as the Proton donor/acceptor.

This sequence belongs to the AlaDH/PNT family. Homohexamer.

The protein localises to the cytoplasm. The catalysed reaction is L-alanine + NAD(+) + H2O = pyruvate + NH4(+) + NADH + H(+). Its pathway is amino-acid degradation; L-alanine degradation via dehydrogenase pathway; NH(3) and pyruvate from L-alanine: step 1/1. Catalyzes the reversible reductive amination of pyruvate to L-alanine. A key factor in the assimilation of L-alanine as an energy source via the tricarboxylic acid cycle during sporulation. This Geobacillus stearothermophilus (Bacillus stearothermophilus) protein is Alanine dehydrogenase (ald).